A 378-amino-acid chain; its full sequence is D-alanine--D-alanine ligase (378 aa).

The ATP-grasp domain occupies Lys-149–Glu-374. Residue Glu-189–Glu-247 participates in ATP binding. The Mg(2+) site is built by Asp-328, Glu-341, and Asn-343.

It belongs to the D-alanine--D-alanine ligase family. It depends on Mg(2+) as a cofactor. The cofactor is Mn(2+).

Its subcellular location is the cytoplasm. The enzyme catalyses 2 D-alanine + ATP = D-alanyl-D-alanine + ADP + phosphate + H(+). Its pathway is cell wall biogenesis; peptidoglycan biosynthesis. Its function is as follows. Cell wall formation. This chain is D-alanine--D-alanine ligase, found in Bifidobacterium animalis subsp. lactis (strain AD011).